The following is a 738-amino-acid chain: Flowering time control protein FCA (738 aa).

Residues 1–118 are disordered; the sequence is MHRGGDRSTD…RGDHSDHDNR (118 aa). 2 stretches are compositionally biased toward gly residues: residues 52–70 and 81–98; these read RGGGGGGGDGGGGGGGGGR and SGGGGYRSGGGGEYGEPG. The segment covering 109-118 has biased composition (basic and acidic residues); sequence RGDHSDHDNR. RRM domains are found at residues 122–203 and 213–293; these read VKLF…YADG and HKLF…FADP. Disordered regions lie at residues 292–451 and 566–595; these read DPKR…PAQQ and QQSNLNHQQPTQGQPVQSSNPGAPNAIIPS. Over residues 301 to 311 the composition is skewed to gly residues; the sequence is SRGGPAFGGPG. Residues 342 to 358 are compositionally biased toward polar residues; that stretch reads HPSSPRSAPHQFNNFGS. A compositionally biased stretch (low complexity) spans 368–377; the sequence is TVTSTTDTAT. Over residues 383-401 the composition is skewed to polar residues; sequence FSGNGSLSSQTAVPSSSHM. The span at 435-451 shows a compositional bias: low complexity; the sequence is QLQNNQQGQPLQGPAQQ. Residues 575 to 595 are compositionally biased toward polar residues; it reads PTQGQPVQSSNPGAPNAIIPS. The WW domain maps to 609–642; it reads VPLTCNWTEHTSPEGFKYYYNSITRESKWDKPEE. Residues 670–738 are disordered; that stretch reads MQQLQSPPQA…QSAQERAWKS (69 aa). Positions 683-706 are enriched in low complexity; that stretch reads PAMQPVQQIPQAQQGQQQMQMKQQ. Polar residues predominate over residues 723 to 732; that stretch reads RIQQGIQSAQ.

As to quaternary structure, interacts with FY. Binds to SF1, FIK, RPRD1B, OsI_31983 and MADS8.

The protein localises to the nucleus. In terms of biological role, plays a major role in the promotion of the transition of the vegetative meristem to reproductive development. Required for RNA-mediated chromatin silencing of a range of loci in the genome. Cotranscriptionally recognizes aberrant RNA and marks it for silencing. Controls alternative cleavage and polyadenylation on pre-mRNAs and antisense RNAs. Regulates flowering time, seed size and cell volume, probably via the modulation of cell size. The protein is Flowering time control protein FCA of Oryza sativa subsp. indica (Rice).